Consider the following 209-residue polypeptide: Uracil phosphoribosyltransferase (209 aa).

5-phospho-alpha-D-ribose 1-diphosphate-binding positions include Arg79, Arg104, and 131–139 (DPMLATGGS). Uracil-binding positions include Ile194 and 199–201 (GDA). Asp200 contacts 5-phospho-alpha-D-ribose 1-diphosphate.

It belongs to the UPRTase family. The cofactor is Mg(2+).

The enzyme catalyses UMP + diphosphate = 5-phospho-alpha-D-ribose 1-diphosphate + uracil. It participates in pyrimidine metabolism; UMP biosynthesis via salvage pathway; UMP from uracil: step 1/1. Allosterically activated by GTP. In terms of biological role, catalyzes the conversion of uracil and 5-phospho-alpha-D-ribose 1-diphosphate (PRPP) to UMP and diphosphate. This Levilactobacillus brevis (strain ATCC 367 / BCRC 12310 / CIP 105137 / JCM 1170 / LMG 11437 / NCIMB 947 / NCTC 947) (Lactobacillus brevis) protein is Uracil phosphoribosyltransferase.